Here is an 880-residue protein sequence, read N- to C-terminus: Alanine--tRNA ligase (880 aa).

Zn(2+) is bound by residues His567, His571, Cys669, and His673.

It belongs to the class-II aminoacyl-tRNA synthetase family. The cofactor is Zn(2+).

The protein resides in the cytoplasm. The enzyme catalyses tRNA(Ala) + L-alanine + ATP = L-alanyl-tRNA(Ala) + AMP + diphosphate. In terms of biological role, catalyzes the attachment of alanine to tRNA(Ala) in a two-step reaction: alanine is first activated by ATP to form Ala-AMP and then transferred to the acceptor end of tRNA(Ala). Also edits incorrectly charged Ser-tRNA(Ala) and Gly-tRNA(Ala) via its editing domain. The chain is Alanine--tRNA ligase from Bacillus thuringiensis (strain Al Hakam).